The chain runs to 303 residues: Serine/threonine-protein phosphatase PP-X homolog 1 (303 aa).

Residues Asp-51, His-53, Asp-79, and Asn-111 each coordinate Mn(2+). The active-site Proton donor is His-112. Mn(2+)-binding residues include His-161 and His-235.

Belongs to the PPP phosphatase family. PP-4 (PP-X) subfamily. Mn(2+) is required as a cofactor.

The catalysed reaction is O-phospho-L-seryl-[protein] + H2O = L-seryl-[protein] + phosphate. It catalyses the reaction O-phospho-L-threonyl-[protein] + H2O = L-threonyl-[protein] + phosphate. In Paramecium tetraurelia, this protein is Serine/threonine-protein phosphatase PP-X homolog 1 (Ppx1).